Here is a 388-residue protein sequence, read N- to C-terminus: Calcium-binding and spermatid-specific protein 1 (388 aa).

Positions 1–20 are disordered; sequence MAEDGLPKIYSHPPAESTKT. Residue T280 is modified to Phosphothreonine; by CK2. Residues S312 and S344 each carry the phosphoserine modification.

Its subcellular location is the cytoplasm. The protein resides in the mitochondrion inner membrane. It localises to the cell projection. It is found in the cilium. The protein localises to the flagellum. Its subcellular location is the cytoplasmic vesicle. The protein resides in the secretory vesicle. It localises to the acrosome. Functionally, calcium-binding protein. Essential for maintaining the structural integrity of the sperm flagella. This Bos taurus (Bovine) protein is Calcium-binding and spermatid-specific protein 1 (CABS1).